The sequence spans 173 residues: RTX-III toxin-activating lysine-acyltransferase ApxIIC (173 aa).

Active-site residues include His29 and Asp98.

The protein belongs to the RTX toxin acyltransferase family. Homodimer.

It localises to the cytoplasm. It carries out the reaction a fatty acyl-[ACP] + L-lysyl-[protein] = N(6)-(fatty acyl)-L-lysyl-[protein] + holo-[ACP] + H(+). In terms of biological role, protein-lysine acyltransferase that catalyzes fatty acylation of the protoxin, thereby converting it to the active toxin. The sequence is that of RTX-III toxin-activating lysine-acyltransferase ApxIIC (apxIIIC) from Actinobacillus pleuropneumoniae (Haemophilus pleuropneumoniae).